The chain runs to 1755 residues: E3 ubiquitin-protein ligase UBR2 (1755 aa).

An N-acetylalanine modification is found at alanine 2. Lysine 94 is covalently cross-linked (Glycyl lysine isopeptide (Lys-Gly) (interchain with G-Cter in ubiquitin)). The segment at 97–168 (HLCGRVFKVG…EGPYCQKHKL (72 aa)) adopts a UBR-type zinc-finger fold. Residues cysteine 99, cysteine 112, cysteine 115, cysteine 124, cysteine 127, histidine 133, and histidine 136 each coordinate Zn(2+). Residue phenylalanine 148 coordinates a peptide. Residue cysteine 149 coordinates Zn(2+). Aspartate 150 is an a peptide binding site. Cysteine 151 serves as a coordination point for Zn(2+). Aspartate 153 serves as a coordination point for a peptide. A Glycyl lysine isopeptide (Lys-Gly) (interchain with G-Cter in ubiquitin) cross-link involves residue lysine 158. Residue cysteine 163 participates in Zn(2+) binding. Lysine 165 participates in a covalent cross-link: Glycyl lysine isopeptide (Lys-Gly) (interchain with G-Cter in ubiquitin). Residue histidine 166 coordinates Zn(2+). Residues lysine 248, lysine 255, and lysine 470 each participate in a glycyl lysine isopeptide (Lys-Gly) (interchain with G-Cter in ubiquitin) cross-link. Residue serine 476 is modified to Phosphoserine. Glycyl lysine isopeptide (Lys-Gly) (interchain with G-Cter in ubiquitin) cross-links involve residues lysine 488, lysine 568, lysine 779, and lysine 789. The segment at 1012-1033 (AEAEGTIMEESSRDKDKAERKR) is disordered. A coiled-coil region spans residues 1019–1054 (MEESSRDKDKAERKRKAEIARLRREKIMAQMSEMQR). Residues 1021 to 1033 (ESSRDKDKAERKR) show a composition bias toward basic and acidic residues. Residues cysteine 1108, cysteine 1111, cysteine 1168, histidine 1170, histidine 1173, cysteine 1176, cysteine 1210, and cysteine 1213 each contribute to the Zn(2+) site. The RING-type; atypical zinc-finger motif lies at 1108 to 1214 (CILCQEEQEV…NGEFLCPLCE (107 aa)). Glycyl lysine isopeptide (Lys-Gly) (interchain with G-Cter in ubiquitin) cross-links involve residues lysine 1496, lysine 1599, and lysine 1689. Serine 1694 carries the post-translational modification Phosphoserine. Position 1697 is a phosphotyrosine (tyrosine 1697).

It belongs to the E3 ubiquitin-protein ligase UBR1-like family. In terms of assembly, interacts with UBE2B; promotes the UBE2B-H2A interaction and the ubiquitination of histone H2A by UBE2B and UBR2. Interacts with RECQL4. Interacts with Tex19.1 and Tex19.2; does not lead to Tex19.1 degradation and stabilizes it. Interacts with L1RE1. Interacts with CASP8. Interacts with ATXN3. Interacts with UBE2O. Post-translationally, dephosphorylated by DUSP22 at Ser-1694 and Tyr-1697, leading to subsequent ubiquitination and proteasomal degradation. In terms of processing, 'Lys-48'-linked ubiquitinated at Lys-94, Lys-779 and Lys-1599 following DUSP22-mediated dephosphorylation of Ser-1694 and Tyr-1697 which promotes UBR2 interaction with the SCF(FBW1A) E3 ubiquitin-protein ligase complex. As to expression, highly expressed in skeletal muscle. Also expressed in heart, kidney and testis. Expressed in acinar cells of the pancreas. In testes, expressed primarily in spermatocytes. Expressed in cerebellum.

The protein resides in the nucleus. It localises to the chromosome. It catalyses the reaction S-ubiquitinyl-[E2 ubiquitin-conjugating enzyme]-L-cysteine + [acceptor protein]-L-lysine = [E2 ubiquitin-conjugating enzyme]-L-cysteine + N(6)-ubiquitinyl-[acceptor protein]-L-lysine.. It participates in protein modification; protein ubiquitination. Functionally, E3 ubiquitin-protein ligase which is a component of the N-end rule pathway. Recognizes and binds to proteins bearing specific N-terminal residues (N-degrons) that are destabilizing according to the N-end rule, leading to their ubiquitination and subsequent degradation. Recognizes both type-1 and type-2 N-degrons, containing positively charged amino acids (Arg, Lys and His) and bulky and hydrophobic amino acids, respectively. Does not ubiquitinate proteins that are acetylated at the N-terminus. In contrast, it strongly binds methylated N-degrons. Plays a critical role in chromatin inactivation and chromosome-wide transcriptional silencing during meiosis via ubiquitination of histone H2A. Binds leucine and is a negative regulator of the leucine-mTOR signaling pathway, thereby controlling cell growth. Required for spermatogenesis, promotes, with Tex19.1, SPO11-dependent recombination foci to accumulate and drive robust homologous chromosome synapsis. Polyubiquitinates LINE-1 retrotransposon encoded, LIRE1, which induces degradation, inhibiting LINE-1 retrotransposon mobilization. Catalyzes ubiquitination and degradation of the N-terminal part of NLRP1B following NLRP1B activation by pathogens and other damage-associated signals: ubiquitination promotes degradation of the N-terminal part and subsequent release of the cleaved C-terminal part of NLRP1B, which polymerizes and forms the NLRP1B inflammasome followed by host cell pyroptosis. Plays a role in T-cell receptor signaling by inducing 'Lys-63'-linked ubiquitination of lymphocyte cell-specific kinase LCK. This activity is regulated by DUSP22, which induces 'Lys-48'-linked ubiquitination of UBR2, leading to its proteasomal degradation by SCF E3 ubiquitin-protein ligase complex. The polypeptide is E3 ubiquitin-protein ligase UBR2 (Mus musculus (Mouse)).